The primary structure comprises 3508 residues: WD repeat and FYVE domain-containing protein 3 (3508 aa).

Residues Ser1942 and Ser2277 each carry the phosphoserine modification. 2 disordered regions span residues 2279 to 2303 (FGLS…SPSP) and 2441 to 2504 (SSEG…EKTD). The segment at 2284 to 2963 (LTGSRRNRKE…PHPPKRVRSR (680 aa)) is sufficient for translocalization to p62 bodies/ALIS. Over residues 2450-2459 (EPEHGEDTIA) the composition is skewed to basic and acidic residues. A Phosphoserine modification is found at Ser2474. Residues 2513–2638 (EEGEKIQHMY…IRNKVYQRFL (126 aa)) form the BEACH-type PH domain. The interval 2568–3508 (MHEPIIPRGA…RGAEDGPRNC (941 aa)) is interaction with SQSTM1. The region spanning 2665–2958 (GLLSTLVGEK…QLFKKPHPPK (294 aa)) is the BEACH domain. The segment at 2963 to 3508 (RLNGDNIGIS…RGAEDGPRNC (546 aa)) is interaction with ATG5. WD repeat units follow at residues 3059–3097 (SEWG…EKAK), 3107–3146 (GHTD…FLTQ), 3149–3188 (GHRA…VSVN), and 3192–3236 (GRSQ…VPET). Residues 3254–3317 (AQIGQQAQDD…SGSDDSRRWS (64 aa)) form a disordered region. The span at 3261-3272 (QDDDSSDSETEE) shows a compositional bias: acidic residues. 2 positions are modified to phosphoserine: Ser3317 and Ser3321. Residues 3326 to 3331 (DGFIFV) carry the LIR motif. One copy of the WD 5 repeat lies at 3390-3429 (THPAEVTALGVSKDHSRILVGDSRGRVFSWSVSDQPGRSA). Residues 3436 to 3496 (DEGGDSCSGC…VCQNCYYSLQ (61 aa)) form an FYVE-type zinc finger. Residues Cys3442, Cys3445, Cys3458, Cys3461, Cys3466, Cys3469, Cys3488, and Cys3491 each contribute to the Zn(2+) site.

Directly interacts with ATG5 and associates with the ATG12-ATG5-ATG16L complex. Interacts with p62/SQSTM1. Directly interacts with GABARAP, GABARAPL1 and GABARAPL2; the interaction with GABARAP is required for WDFY3 recruitment to MAP1LC3B-positive p62/SQSTM1 bodies. Weakly interacts with MAP1LC3C; this interaction is direct. Does not interact with MAP1LC3A, nor MAP1LC3B. Interacts with TRAF6. Widely expressed, with high levels in the brain (at protein level). In the brain, expressed by both neuronal and non-neuronal cells. Expressed in bones, in the periosteum, cartilage, growth plate, trabeculae of the primary spongiosa, and scattered hematopoietic cells within the medullary cavity. Tends to be expressed at lower levels in the hypertrophic zone compared to trabeculae. Expressed in osteoblasts, osteoclasts and bone-marrow derived macrophages.

It localises to the nucleus. It is found in the cytoplasm. The protein resides in the cytosol. The protein localises to the PML body. Its subcellular location is the membrane. It localises to the perikaryon. It is found in the cell projection. The protein resides in the axon. Functionally, required for selective macroautophagy (aggrephagy). Acts as an adapter protein by linking specific proteins destined for degradation to the core autophagic machinery members, such as the ATG5-ATG12-ATG16L E3-like ligase, SQSTM1 and LC3. Involved in the formation and autophagic degradation of cytoplasmic ubiquitin-containing inclusions (p62 bodies, ALIS/aggresome-like induced structures). Important for normal brain development. Essential for the formation of axonal tracts throughout the brain and spinal cord, including the formation of the major forebrain commissures. Involved in the ability of neural cells to respond to guidance cues. Required for cortical neurons to respond to the trophic effects of netrin-1/NTN1. Regulates Wnt signaling through the removal of DVL3 aggregates, likely in an autophagy-dependent manner. This process may be important for the determination of brain size during embryonic development. May regulate osteoclastogenesis by acting on the TNFSF11/RANKL - TRAF6 pathway. After cytokinetic abscission, involved in midbody remnant degradation. In vitro strongly binds to phosphatidylinositol 3-phosphate (PtdIns3P). The protein is WD repeat and FYVE domain-containing protein 3 (Wdfy3) of Mus musculus (Mouse).